An 891-amino-acid chain; its full sequence is 26S proteasome non-ATPase regulatory subunit 2 homolog A (891 aa).

The interval 1–44 (MAPTQDPNSVGGGAKKDEATLKVPSKDPKKKDEKKDEDLSEEDL) is disordered. Positions 14–21 (AKKDEATL) match the Nuclear localization signal motif. The segment covering 14-37 (AKKDEATLKVPSKDPKKKDEKKDE) has biased composition (basic and acidic residues). A Glycyl lysine isopeptide (Lys-Gly) (interchain with G-Cter in ubiquitin) cross-link involves residue K218. Position 219 is an O-acetylthreonine (T219). PC repeat units follow at residues 414-447 (SAAA…PIIA), 448-484 (GALL…SVRI), 485-519 (GAIM…PLDV), 522-556 (FASL…AELG), 565-594 (LGLG…KIRK), 674-705 (LALG…EVAM), and 724-739 (AGML…KDMS).

This sequence belongs to the proteasome subunit S2 family. As to quaternary structure, component of the 19S regulatory particle (RP/PA700) base subcomplex of the 26S proteasome. The 26S proteasome is composed of a core protease (CP), known as the 20S proteasome, capped at one or both ends by the 19S regulatory particle (RP/PA700). The RP/PA700 complex is composed of at least 17 different subunits in two subcomplexes, the base and the lid, which form the portions proximal and distal to the 20S proteolytic core, respectively. Interacts with JMJ27. Expressed in stems, leaves, buds, flowers, siliques and developing seeds.

The protein localises to the nucleus. It localises to the cytoplasm. Acts as a regulatory subunit of the 26 proteasome which is involved in the ATP-dependent degradation of ubiquitinated proteins. Required during embryogenesis. Required for optimal plant growth and stress responses. Required for innate immunity. Prevents JMJ27 accumulation in non-drought conditions. The protein is 26S proteasome non-ATPase regulatory subunit 2 homolog A of Arabidopsis thaliana (Mouse-ear cress).